We begin with the raw amino-acid sequence, 301 residues long: PWI domain-containing protein C825.05c (301 aa).

Residues 26–137 form the PWI domain; that stretch reads STKFPASYDT…YGIPEKFILE (112 aa). At S86 the chain carries Phosphoserine. Composition is skewed to basic and acidic residues over residues 145–182, 189–205, and 215–229; these read LKDR…ERNG, TLDR…ERNR, and RFSE…DIRS. The interval 145-301 is disordered; the sequence is LKDRTEASKE…ESDSGTQKHD (157 aa). Residue S199 is modified to Phosphoserine. A compositionally biased stretch (basic residues) spans 244-253; the sequence is PTRRRERHYR. The segment covering 254-289 has biased composition (basic and acidic residues); the sequence is TRDDEGFDEFGRSRDGRWRESRTSYREKHRYDRDAL. The segment covering 290 to 301 has biased composition (polar residues); it reads SSESDSGTQKHD. S291 bears the Phosphoserine mark.

Its subcellular location is the nucleus. The chain is PWI domain-containing protein C825.05c from Schizosaccharomyces pombe (strain 972 / ATCC 24843) (Fission yeast).